The sequence spans 233 residues: 2,3,4,5-tetrahydropyridine-2,6-dicarboxylate N-acetyltransferase (233 aa).

This sequence belongs to the transferase hexapeptide repeat family. DapH subfamily.

The enzyme catalyses (S)-2,3,4,5-tetrahydrodipicolinate + acetyl-CoA + H2O = L-2-acetamido-6-oxoheptanedioate + CoA. It participates in amino-acid biosynthesis; L-lysine biosynthesis via DAP pathway; LL-2,6-diaminopimelate from (S)-tetrahydrodipicolinate (acetylase route): step 1/3. Catalyzes the transfer of an acetyl group from acetyl-CoA to tetrahydrodipicolinate. This chain is 2,3,4,5-tetrahydropyridine-2,6-dicarboxylate N-acetyltransferase, found in Oenococcus oeni (strain ATCC BAA-331 / PSU-1).